The sequence spans 265 residues: Small ribosomal subunit protein uS2 (265 aa).

Belongs to the universal ribosomal protein uS2 family.

The sequence is that of Small ribosomal subunit protein uS2 from Ligilactobacillus salivarius (strain UCC118) (Lactobacillus salivarius).